The primary structure comprises 354 residues: Uroporphyrinogen decarboxylase (354 aa).

Residues 27–31 (RRAGR), phenylalanine 46, aspartate 77, tyrosine 154, threonine 209, and histidine 327 contribute to the substrate site.

This sequence belongs to the uroporphyrinogen decarboxylase family. Homodimer.

It is found in the cytoplasm. The catalysed reaction is uroporphyrinogen III + 4 H(+) = coproporphyrinogen III + 4 CO2. It functions in the pathway porphyrin-containing compound metabolism; protoporphyrin-IX biosynthesis; coproporphyrinogen-III from 5-aminolevulinate: step 4/4. Functionally, catalyzes the decarboxylation of four acetate groups of uroporphyrinogen-III to yield coproporphyrinogen-III. The sequence is that of Uroporphyrinogen decarboxylase from Salmonella typhimurium (strain LT2 / SGSC1412 / ATCC 700720).